Reading from the N-terminus, the 459-residue chain is Cysteine--tRNA ligase (459 aa).

C28 contributes to the Zn(2+) binding site. Positions 30-40 match the 'HIGH' region motif; the sequence is VTVYDLCHIGH. 3 residues coordinate Zn(2+): C209, H234, and E238. The 'KMSKS' region motif lies at 266–270; that stretch reads KMSKS. K269 is an ATP binding site.

The protein belongs to the class-I aminoacyl-tRNA synthetase family. Monomer. Requires Zn(2+) as cofactor.

It is found in the cytoplasm. It catalyses the reaction tRNA(Cys) + L-cysteine + ATP = L-cysteinyl-tRNA(Cys) + AMP + diphosphate. This is Cysteine--tRNA ligase from Histophilus somni (strain 2336) (Haemophilus somnus).